The primary structure comprises 88 residues: RNA-binding protein Hfq (88 aa).

Residues 9-68 (DPYLNVLRKERVPVSIYLVNGIKLQGQVESFDQFVVLLKNTVSQMVYKHAISTVVPSRAV) form the Sm domain.

This sequence belongs to the Hfq family. As to quaternary structure, homohexamer.

Functionally, RNA chaperone that binds small regulatory RNA (sRNAs) and mRNAs to facilitate mRNA translational regulation in response to envelope stress, environmental stress and changes in metabolite concentrations. Also binds with high specificity to tRNAs. The polypeptide is RNA-binding protein Hfq (Cellvibrio japonicus (strain Ueda107) (Pseudomonas fluorescens subsp. cellulosa)).